We begin with the raw amino-acid sequence, 231 residues long: Uracil phosphoribosyltransferase (231 aa).

Residue 38-42 (KGLVR) coordinates GTP. 5-phospho-alpha-D-ribose 1-diphosphate-binding positions include R87, R112, and 140 to 148 (DPMIATGST). Residues I203 and 208-210 (GDA) contribute to the uracil site. D209 is a 5-phospho-alpha-D-ribose 1-diphosphate binding site.

Belongs to the UPRTase family. Mg(2+) serves as cofactor.

It catalyses the reaction UMP + diphosphate = 5-phospho-alpha-D-ribose 1-diphosphate + uracil. It participates in pyrimidine metabolism; UMP biosynthesis via salvage pathway; UMP from uracil: step 1/1. With respect to regulation, allosterically activated by GTP. Its function is as follows. Catalyzes the conversion of uracil and 5-phospho-alpha-D-ribose 1-diphosphate (PRPP) to UMP and diphosphate. The polypeptide is Uracil phosphoribosyltransferase (Methanococcus maripaludis (strain C5 / ATCC BAA-1333)).